Here is a 285-residue protein sequence, read N- to C-terminus: Small ribosomal subunit protein uS2 (285 aa).

The interval 262-285 (NDDWNEDDTAPAAPGAASWGGAAF) is disordered. A compositionally biased stretch (low complexity) spans 271–285 (APAAPGAASWGGAAF).

Belongs to the universal ribosomal protein uS2 family. In terms of assembly, component of the small ribosomal subunit. Mature ribosomes consist of a small (40S) and a large (60S) subunit. The 40S subunit contains about 33 different proteins and 1 molecule of RNA (18S). The 60S subunit contains about 49 different proteins and 3 molecules of RNA (28S, 5.8S and 5S). Interacts with ribosomal protein S21.

The protein localises to the cytoplasm. Its function is as follows. Required for the assembly and/or stability of the 40S ribosomal subunit. Required for the processing of the 20S rRNA-precursor to mature 18S rRNA in a late step of the maturation of 40S ribosomal subunits. In Anopheles gambiae (African malaria mosquito), this protein is Small ribosomal subunit protein uS2.